We begin with the raw amino-acid sequence, 283 residues long: Elongation factor Ts (283 aa).

The interval 79-82 (TDFV) is involved in Mg(2+) ion dislocation from EF-Tu.

It belongs to the EF-Ts family.

The protein localises to the cytoplasm. Associates with the EF-Tu.GDP complex and induces the exchange of GDP to GTP. It remains bound to the aminoacyl-tRNA.EF-Tu.GTP complex up to the GTP hydrolysis stage on the ribosome. This is Elongation factor Ts from Shewanella denitrificans (strain OS217 / ATCC BAA-1090 / DSM 15013).